A 93-amino-acid chain; its full sequence is Neurophysin 1 (93 aa).

7 disulfide bridges follow: cysteine 10–cysteine 54, cysteine 13–cysteine 27, cysteine 21–cysteine 44, cysteine 28–cysteine 34, cysteine 61–cysteine 74, cysteine 68–cysteine 86, and cysteine 75–cysteine 80.

Belongs to the vasopressin/oxytocin family.

Its function is as follows. Neurophysin 1 specifically binds oxytocin. This chain is Neurophysin 1, found in Struthio camelus (Common ostrich).